A 359-amino-acid chain; its full sequence is Methyltransferase eqxD (359 aa).

S-adenosyl-L-methionine-binding positions include 198-199 (GG), Asp224, 248-249 (SF), Arg264, and Arg265.

This sequence belongs to the class I-like SAM-binding methyltransferase superfamily. Cation-independent O-methyltransferase family.

It catalyses the reaction trichosetin + S-adenosyl-L-methionine = equisetin + S-adenosyl-L-homocysteine + H(+). It functions in the pathway mycotoxin biosynthesis. Methyltransferase; part of the gene cluster that mediates the biosynthesis of equisetin, a trans-fused decalin-containing tetramic acid with antimicrobial activity. The PKS module of eqxS together with the enoylreductase eqxC catalyze the formation of the polyketide unit which is then conjugated to L-serine by the condensation domain of the eqxS NRPS module. Activity of the Dieckmann cyclase domain (RED) results in release of the Dieckmann product intermediate. Diels-Alderase eqx3 is involved in endo-selective Diels-Alder cycloaddition to form the decalin ring, leading to the production of N-desmethylequisetin also called trichosetin. Subsequent N-methylation is carried out by eqxD to give equisetin. The chain is Methyltransferase eqxD from Fusarium heterosporum.